The primary structure comprises 290 residues: Release factor glutamine methyltransferase (290 aa).

Asp-140 and Asn-181 together coordinate S-adenosyl-L-methionine. 181 to 184 (NPPY) serves as a coordination point for substrate.

Belongs to the protein N5-glutamine methyltransferase family. PrmC subfamily.

The enzyme catalyses L-glutaminyl-[peptide chain release factor] + S-adenosyl-L-methionine = N(5)-methyl-L-glutaminyl-[peptide chain release factor] + S-adenosyl-L-homocysteine + H(+). Functionally, methylates the class 1 translation termination release factors RF1/PrfA and RF2/PrfB on the glutamine residue of the universally conserved GGQ motif. The protein is Release factor glutamine methyltransferase of Chlamydia trachomatis serovar D (strain ATCC VR-885 / DSM 19411 / UW-3/Cx).